The primary structure comprises 689 residues: MSDKTFLVEIGTEELPPKALRSLAESFAANVTAELDNAGLTHGKIEWFAAPRRLALKVANLAASQADREVEKRGPAISQAFDAEGKPSKAAEGWARGCGITVDQAERLTTDKGEWLLYRAHVKGESAEALLPNMIATSLAKLPIPKLMRWGASDVHFVRPVHTVTLLLGDTVIPATILGIQSDRVIRGHRFMGEPEFTIDNADQYPQILLERGKVIADYELRKAKIKADAEEAARKIGGNADLSESLLEEVTSLVEWPVVLTAKFEEKFLAVPAEALVYTMKGDQKYFPVYANDGKLLPNFIFVANIESKDPIQIISGNEKVVRPRLADAEFFFNTDRKKRLEDHLPRLQTVLFQQQLGTLRDKTDRIAELSGWIAREIGADVNHATRAGLLSKCDLMTNMVFEFTDTQGVMGMHYARHDGEAEDVAVALNEQYQPRFAGDDLPSNPVACAVAIADKMDTLAGIFGIGQHPKGDKDPFALRRAALGVLRIIVEKNLSLDLQTLTEEAVRLYGDKLTNAKVVDEVIDFMLGRFRAWYQDEGYTVDTIQAVLARRPTRPADFDARMKAVSHFRTLEAASALAAANKRVSNILAKSDETLNERVNAATLKEPEEIALALQVVVLRDKLEPFFAEGRYQEALVELAELREVIDAFFEKVMVNVEDKDLRINRLSMLEKLRELFLRVADISLLQ.

Belongs to the class-II aminoacyl-tRNA synthetase family. Tetramer of two alpha and two beta subunits.

The protein resides in the cytoplasm. The enzyme catalyses tRNA(Gly) + glycine + ATP = glycyl-tRNA(Gly) + AMP + diphosphate. The polypeptide is Glycine--tRNA ligase beta subunit (Enterobacter sp. (strain 638)).